A 993-amino-acid polypeptide reads, in one-letter code: Serine/threonine-protein phosphatase 6 regulatory ankyrin repeat subunit B (993 aa).

ANK repeat units lie at residues cysteine 7–alanine 36, glutamate 40–alanine 69, methionine 73–alanine 102, asparagine 106–valine 135, glycine 139–alanine 168, lysine 172–cysteine 201, lysine 205–glutamate 234, tyrosine 238–glutamine 267, serine 271–isoleucine 301, aspartate 305–cysteine 334, aspartate 338–lysine 367, histidine 371–threonine 400, phenylalanine 404–lysine 433, cysteine 437–glutamate 466, tryptophan 470–glutamate 498, glutamate 531–glutamate 561, alanine 566–isoleucine 595, lysine 599–valine 628, threonine 633–valine 662, lysine 669–alanine 698, valine 702–cysteine 731, arginine 735–aspartate 764, glutamine 771–phenylalanine 800, asparagine 803–valine 832, lysine 838–alanine 867, serine 871–valine 901, aspartate 905–leucine 934, and alanine 941–alanine 970. Residues asparagine 974–glutamate 993 form a disordered region.

Protein phosphatase 6 (PP6) holoenzyme is proposed to be a heterotrimeric complex formed by the catalytic subunit, a SAPS domain-containing subunit (PP6R) and an ankyrin repeat-domain containing regulatory subunit (ARS). Interacts with PPP6R1.

In terms of biological role, putative regulatory subunit of protein phosphatase 6 (PP6) that may be involved in the recognition of phosphoprotein substrates. This Mus musculus (Mouse) protein is Serine/threonine-protein phosphatase 6 regulatory ankyrin repeat subunit B (Ankrd44).